A 137-amino-acid chain; its full sequence is Putative pre-16S rRNA nuclease (137 aa).

Belongs to the YqgF nuclease family.

The protein localises to the cytoplasm. In terms of biological role, could be a nuclease involved in processing of the 5'-end of pre-16S rRNA. The protein is Putative pre-16S rRNA nuclease of Bacillus cereus (strain G9842).